We begin with the raw amino-acid sequence, 669 residues long: DNA ligase (669 aa).

Residues 32 to 36, 81 to 82, and Glu-111 contribute to the NAD(+) site; these read DAEYD and SL. Residue Lys-113 is the N6-AMP-lysine intermediate of the active site. The NAD(+) site is built by Arg-134, Glu-171, Lys-290, and Lys-314. Residues Cys-408, Cys-411, Cys-426, and Cys-432 each coordinate Zn(2+). The BRCT domain occupies 591–669; the sequence is EEALSLKGQT…EAELLAILGS (79 aa).

This sequence belongs to the NAD-dependent DNA ligase family. LigA subfamily. Requires Mg(2+) as cofactor. The cofactor is Mn(2+).

The enzyme catalyses NAD(+) + (deoxyribonucleotide)n-3'-hydroxyl + 5'-phospho-(deoxyribonucleotide)m = (deoxyribonucleotide)n+m + AMP + beta-nicotinamide D-nucleotide.. DNA ligase that catalyzes the formation of phosphodiester linkages between 5'-phosphoryl and 3'-hydroxyl groups in double-stranded DNA using NAD as a coenzyme and as the energy source for the reaction. It is essential for DNA replication and repair of damaged DNA. The chain is DNA ligase from Shewanella loihica (strain ATCC BAA-1088 / PV-4).